We begin with the raw amino-acid sequence, 359 residues long: Heat-inducible transcription repressor HrcA (359 aa).

The protein belongs to the HrcA family.

Functionally, negative regulator of class I heat shock genes (grpE-dnaK-dnaJ and groELS operons). Prevents heat-shock induction of these operons. The polypeptide is Heat-inducible transcription repressor HrcA (Roseiflexus castenholzii (strain DSM 13941 / HLO8)).